We begin with the raw amino-acid sequence, 127 residues long: Small integral membrane protein 33 (127 aa).

Asn15 carries N-linked (GlcNAc...) asparagine glycosylation. A helical transmembrane segment spans residues 38–58 (PLLAAIIAAFVLLAICIVLAV).

The protein resides in the membrane. This is Small integral membrane protein 33 from Mus musculus (Mouse).